Reading from the N-terminus, the 384-residue chain is tRNA-specific 2-thiouridylase MnmA (384 aa).

ATP is bound by residues G30–S37 and M56. The interaction with target base in tRNA stretch occupies residues N116–D118. The active-site Nucleophile is the C121. The cysteines at positions 121 and 218 are disulfide-linked. G146 is a binding site for ATP. An interaction with tRNA region spans residues K168–Q170. The active-site Cysteine persulfide intermediate is C218. Positions R330 to Y331 are interaction with tRNA.

Belongs to the MnmA/TRMU family.

Its subcellular location is the cytoplasm. It catalyses the reaction S-sulfanyl-L-cysteinyl-[protein] + uridine(34) in tRNA + AH2 + ATP = 2-thiouridine(34) in tRNA + L-cysteinyl-[protein] + A + AMP + diphosphate + H(+). Its function is as follows. Catalyzes the 2-thiolation of uridine at the wobble position (U34) of tRNA, leading to the formation of s(2)U34. The protein is tRNA-specific 2-thiouridylase MnmA of Haemophilus ducreyi (strain 35000HP / ATCC 700724).